A 636-amino-acid polypeptide reads, in one-letter code: DNA mismatch repair protein MutL (636 aa).

Residues 332-344 (HAGEQGDSLRTDI) show a composition bias toward basic and acidic residues. Disordered regions lie at residues 332–360 (HAGEQGDSLRTDIADAPEQPGATATPADN) and 417–443 (ASAPADAAPAQASEPAAAPQADDSDDA). The span at 417-437 (ASAPADAAPAQASEPAAAPQA) shows a compositional bias: low complexity.

Belongs to the DNA mismatch repair MutL/HexB family.

This protein is involved in the repair of mismatches in DNA. It is required for dam-dependent methyl-directed DNA mismatch repair. May act as a 'molecular matchmaker', a protein that promotes the formation of a stable complex between two or more DNA-binding proteins in an ATP-dependent manner without itself being part of a final effector complex. The polypeptide is DNA mismatch repair protein MutL (Ralstonia nicotianae (strain ATCC BAA-1114 / GMI1000) (Ralstonia solanacearum)).